Consider the following 776-residue polypeptide: MVKQAVKVFVRTRPTATSGSGLKLGPDGQSVSVNVPKDLSAGPVNNQQEQFSFKFDGVLENVSQEAAYTTLAHEVVDSLMAGYHGTIFAYGQTGAGKTFTMSGGGTAYAHRGLIPRAIHHVFREVDMRADKMYRVHVSYLEIYNEQLYDLLGDTPGTSDALAVLEDSNSNTYVRGLTLVPVRSEEEALAQFFLGEQGRTTAGHVLNAESSRSHTVFTIHVEMRTSDAASERAVLSKLNLVDLAGSERTKKTGVTGQTLKEAQFINRSLSFLEQTVNALSRKDTYVPFRQTKLTAVLRDALGGNCKTVMVANIWAEPSHNEETLSTLRFASRVRTLTTDLALNESNDPALLLRRYERQIKELKAELAMRDTLSGKGRVSYDDLTDDELRELHATCRRFLHGEAEPEDLPADSMKRVRETFKALRAVHVAIKADMATQMATLRRATEEGSGAAARGGDSAGPSGVGDVDLRATGGFTVGHAPLDARPPVRSELGSPGAGASGAEALGEPRSPGGGLHAQASSHTDAGSNWGDAGPLSSPGGTRLAGIFGVSGDRNAVFRRYKVDVGEGRELAASLKAASIALADTKASIRSLGASVNDAKQRIDELSSALALRRGATPAGGDGEVLDSEAYALMQELKSAKSRYRTDFDSLKSAREELEPQIQAVAVARAGLLEAFDRWAAAQSDTTLKRMATAGRAMSGIAPGEEDEMDAGEQFERMQIARISERDPDSLAFHTALKRTGAAVSRPATVATGGNAKAAAMATRKMEHTQAVNRGLAR.

One can recognise a Kinesin motor domain in the interval 5-335 (AVKVFVRTRP…LRFASRVRTL (331 aa)). 91-98 (GQTGAGKT) contributes to the ATP binding site. Residues 348–371 (ALLLRRYERQIKELKAELAMRDTL) are a coiled coil. The tract at residues 441 to 535 (RRATEEGSGA…SNWGDAGPLS (95 aa)) is disordered. Residues 447–460 (GSGAAARGGDSAGP) show a composition bias toward low complexity. Positions 579–657 (ALADTKASIR…SLKSAREELE (79 aa)) form a coiled coil. The segment at 658–776 (PQIQAVAVAR…TQAVNRGLAR (119 aa)) is globular.

It belongs to the TRAFAC class myosin-kinesin ATPase superfamily. Kinesin family.

The protein resides in the cytoplasm. Its subcellular location is the cytoskeleton. It localises to the flagellum axoneme. Its function is as follows. May play a role in rotation or twisting of the central pair microtubules of the flagella axoneme. The polypeptide is Kinesin-like protein KLP1 (KLP1) (Chlamydomonas reinhardtii (Chlamydomonas smithii)).